The sequence spans 864 residues: Alanine--tRNA ligase (864 aa).

Zn(2+) is bound by residues histidine 534, histidine 538, cysteine 639, and histidine 643.

It belongs to the class-II aminoacyl-tRNA synthetase family. The cofactor is Zn(2+).

The protein resides in the cytoplasm. It carries out the reaction tRNA(Ala) + L-alanine + ATP = L-alanyl-tRNA(Ala) + AMP + diphosphate. In terms of biological role, catalyzes the attachment of alanine to tRNA(Ala) in a two-step reaction: alanine is first activated by ATP to form Ala-AMP and then transferred to the acceptor end of tRNA(Ala). Also edits incorrectly charged Ser-tRNA(Ala) and Gly-tRNA(Ala) via its editing domain. The protein is Alanine--tRNA ligase of Aster yellows witches'-broom phytoplasma (strain AYWB).